The sequence spans 293 residues: ATP phosphoribosyltransferase (293 aa).

Belongs to the ATP phosphoribosyltransferase family. Long subfamily. The cofactor is Mg(2+).

It is found in the cytoplasm. It catalyses the reaction 1-(5-phospho-beta-D-ribosyl)-ATP + diphosphate = 5-phospho-alpha-D-ribose 1-diphosphate + ATP. Its pathway is amino-acid biosynthesis; L-histidine biosynthesis; L-histidine from 5-phospho-alpha-D-ribose 1-diphosphate: step 1/9. Feedback inhibited by histidine. Catalyzes the condensation of ATP and 5-phosphoribose 1-diphosphate to form N'-(5'-phosphoribosyl)-ATP (PR-ATP). Has a crucial role in the pathway because the rate of histidine biosynthesis seems to be controlled primarily by regulation of HisG enzymatic activity. This chain is ATP phosphoribosyltransferase, found in Nitratidesulfovibrio vulgaris (strain DSM 19637 / Miyazaki F) (Desulfovibrio vulgaris).